A 652-amino-acid polypeptide reads, in one-letter code: Engulfment and cell motility protein 3 (652 aa).

The 173-residue stretch at 307 to 479 folds into the ELMO domain; the sequence is EQREQLQALR…VVREQLARTL (173 aa).

In terms of assembly, probably interacts directly with the SH3-domain of DOCK1 via its SH3-binding site. Part of a complex with DOCK1 and RAC1. Interacts with ADGRB3.

It is found in the cytoplasm. Involved in cytoskeletal rearrangements required for phagocytosis of apoptotic cells and cell motility. Acts in association with DOCK1 and CRK. Was initially proposed to be required in complex with DOCK1 to activate Rac Rho small GTPases. May enhance the guanine nucleotide exchange factor (GEF) activity of DOCK1. This chain is Engulfment and cell motility protein 3 (ELMO3), found in Bos taurus (Bovine).